The chain runs to 241 residues: Phosphoribosyl isomerase A (241 aa).

Asp-11 acts as the Proton acceptor in catalysis. Catalysis depends on Asp-130, which acts as the Proton donor.

This sequence belongs to the HisA/HisF family.

It is found in the cytoplasm. It catalyses the reaction 1-(5-phospho-beta-D-ribosyl)-5-[(5-phospho-beta-D-ribosylamino)methylideneamino]imidazole-4-carboxamide = 5-[(5-phospho-1-deoxy-D-ribulos-1-ylimino)methylamino]-1-(5-phospho-beta-D-ribosyl)imidazole-4-carboxamide. The catalysed reaction is N-(5-phospho-beta-D-ribosyl)anthranilate = 1-(2-carboxyphenylamino)-1-deoxy-D-ribulose 5-phosphate. It functions in the pathway amino-acid biosynthesis; L-histidine biosynthesis; L-histidine from 5-phospho-alpha-D-ribose 1-diphosphate: step 4/9. Its pathway is amino-acid biosynthesis; L-tryptophan biosynthesis; L-tryptophan from chorismate: step 3/5. Functionally, involved in both the histidine and tryptophan biosynthetic pathways. This Streptomyces griseus subsp. griseus (strain JCM 4626 / CBS 651.72 / NBRC 13350 / KCC S-0626 / ISP 5235) protein is Phosphoribosyl isomerase A.